The following is a 592-amino-acid chain: Probable auxin efflux carrier component 1c (592 aa).

Topologically, residues 1 to 6 (MITGAD) are extracellular. A helical membrane pass occupies residues 7-27 (FYHVMTAMVPLYVAMILAYGS). Residues 28-38 (VKWWRIFTPDQ) are Cytoplasmic-facing. A helical transmembrane segment spans residues 39-59 (CSGINRFVALFAVPLLSFHFI). Val51 contacts (indol-3-yl)acetate. The Extracellular segment spans residues 60 to 70 (STNNPYTMNLR). Residues 71-91 (FIAADTLQKLIVLALLTLWSH) traverse the membrane as a helical segment. The Cytoplasmic portion of the chain corresponds to 92–100 (LSRRGSLEW). The helical transmembrane segment at 101–121 (TITLFSLSTLPNTLVMGIPLL) threads the bilayer. Positions 112 and 114 each coordinate (indol-3-yl)acetate. Residues 122-131 (KGMYGEFSGS) lie on the Extracellular side of the membrane. A helical transmembrane segment spans residues 132–152 (LMVQIVVLQCIIWYTLMLFMF). A (indol-3-yl)acetate-binding site is contributed by Tyr145. The Cytoplasmic portion of the chain corresponds to 153 to 452 (EYRGARILIT…LIRNPNTYSS (300 aa)). Disordered stretches follow at residues 214–236 (RSDVYSRRSMGFSSTTPRPSNLT) and 282–331 (GATP…AKGE). Positions 224 to 236 (GFSSTTPRPSNLT) are enriched in polar residues. The segment covering 309–318 (APNPAMAAPP) has biased composition (pro residues). A helical transmembrane segment spans residues 453 to 473 (LIGLIWSLVCFRWNFEMPAII). Residues 474-476 (LKS) are Extracellular-facing. Residues 477–497 (ISILSDAGLGMAMFSLGLFMA) form a helical membrane-spanning segment. The Cytoplasmic segment spans residues 498 to 511 (LQPRIIACGNKVAT). A helical membrane pass occupies residues 512 to 532 (FAMAVRFLTGPAVMAAASIAV). Over 533–537 (GLRGT) the chain is Extracellular. Residues 538–558 (LLHVAIVQAALPQGIVPFVFA) form a helical membrane-spanning segment. (indol-3-yl)acetate contacts are provided by Ile552 and Val553. Residues 559–571 (KEYSVHPDILSTA) are Cytoplasmic-facing. Residues 572–592 (VIFGMLIALPITLVYYILLGL) form a helical membrane-spanning segment.

This sequence belongs to the auxin efflux carrier (TC 2.A.69.1) family. In terms of assembly, homodimer. Expressed at low levels in roots and leaves. Expressed in roots, stem bases, stems, leaves and young panicles.

It localises to the membrane. May act as a component of the auxin efflux carrier. This Oryza sativa subsp. japonica (Rice) protein is Probable auxin efflux carrier component 1c.